Consider the following 246-residue polypeptide: Neurotrophic factor BDNF precursor form (246 aa).

An N-terminal signal peptide occupies residues 1–18; sequence MTILFLTMVISYLSCMKA. A propeptide spanning residues 19 to 127 is cleaved from the precursor; that stretch reads TPMKEVSIRG…AANMSMRVRR (109 aa). N-linked (GlcNAc...) asparagine glycosylation is present at Asn120. Intrachain disulfides connect Cys140–Cys207, Cys185–Cys236, and Cys195–Cys238.

This sequence belongs to the NGF-beta family.

It is found in the secreted. Functionally, promotes the survival of neuronal populations that are all located either in the central nervous system or directly connected to it. The protein is Neurotrophic factor BDNF precursor form (BDNF) of Ptyas major (Chinese green snake).